Consider the following 106-residue polypeptide: MIISTTSQLEGRPIAEYLGVVSSESVQGINFVRDFFARFRDFFGGRSQTLEGALRLAREQATEELKARARQLQADAVVGVDFEISMPSVQGGMVVVFATGTAVRLK.

It belongs to the UPF0145 family.

The polypeptide is UPF0145 protein PputW619_2377 (Pseudomonas putida (strain W619)).